We begin with the raw amino-acid sequence, 298 residues long: KH domain-containing protein At1g09660/At1g09670 (298 aa).

In terms of domain architecture, KH spans 152-219 (DVPVDKYPSY…EHLCEPLHVL (68 aa)). The segment at 266-298 (NGTLREESPSPSLSPCLSPSMSPFNSKRAKTEI) is disordered. Phosphoserine occurs at positions 273 and 287. The segment covering 274-288 (PSPSLSPCLSPSMSP) has biased composition (low complexity).

It localises to the nucleus. The chain is KH domain-containing protein At1g09660/At1g09670 from Arabidopsis thaliana (Mouse-ear cress).